We begin with the raw amino-acid sequence, 311 residues long: Acetyl-coenzyme A carboxylase carboxyl transferase subunit alpha (311 aa).

The 251-residue stretch at 36 to 286 (NLEKEVAKVY…ASYFVSKLEK (251 aa)) folds into the CoA carboxyltransferase C-terminal domain.

Belongs to the AccA family. As to quaternary structure, acetyl-CoA carboxylase is a heterohexamer composed of biotin carboxyl carrier protein (AccB), biotin carboxylase (AccC) and two subunits each of ACCase subunit alpha (AccA) and ACCase subunit beta (AccD).

It localises to the cytoplasm. It carries out the reaction N(6)-carboxybiotinyl-L-lysyl-[protein] + acetyl-CoA = N(6)-biotinyl-L-lysyl-[protein] + malonyl-CoA. Its pathway is lipid metabolism; malonyl-CoA biosynthesis; malonyl-CoA from acetyl-CoA: step 1/1. Component of the acetyl coenzyme A carboxylase (ACC) complex. First, biotin carboxylase catalyzes the carboxylation of biotin on its carrier protein (BCCP) and then the CO(2) group is transferred by the carboxyltransferase to acetyl-CoA to form malonyl-CoA. This chain is Acetyl-coenzyme A carboxylase carboxyl transferase subunit alpha, found in Campylobacter curvus (strain 525.92).